Here is a 222-residue protein sequence, read N- to C-terminus: Protein GrpE (222 aa).

This sequence belongs to the GrpE family. In terms of assembly, homodimer.

The protein resides in the cytoplasm. Participates actively in the response to hyperosmotic and heat shock by preventing the aggregation of stress-denatured proteins, in association with DnaK and GrpE. It is the nucleotide exchange factor for DnaK and may function as a thermosensor. Unfolded proteins bind initially to DnaJ; upon interaction with the DnaJ-bound protein, DnaK hydrolyzes its bound ATP, resulting in the formation of a stable complex. GrpE releases ADP from DnaK; ATP binding to DnaK triggers the release of the substrate protein, thus completing the reaction cycle. Several rounds of ATP-dependent interactions between DnaJ, DnaK and GrpE are required for fully efficient folding. This chain is Protein GrpE, found in Bartonella bacilliformis (strain ATCC 35685 / KC583 / Herrer 020/F12,63).